The following is a 199-amino-acid chain: Recombination protein RecR (199 aa).

A C4-type zinc finger spans residues 57–72; sequence CEKCNNFTEEVVCELC. Residues 80–175 form the Toprim domain; the sequence is ALLCVVEMPA…KITRIARGLP (96 aa).

It belongs to the RecR family.

Functionally, may play a role in DNA repair. It seems to be involved in an RecBC-independent recombinational process of DNA repair. It may act with RecF and RecO. The protein is Recombination protein RecR of Nitrosospira multiformis (strain ATCC 25196 / NCIMB 11849 / C 71).